Consider the following 161-residue polypeptide: Protein-export protein SecB (161 aa).

This sequence belongs to the SecB family. Homotetramer, a dimer of dimers. One homotetramer interacts with 1 SecA dimer.

The protein resides in the cytoplasm. One of the proteins required for the normal export of preproteins out of the cell cytoplasm. It is a molecular chaperone that binds to a subset of precursor proteins, maintaining them in a translocation-competent state. It also specifically binds to its receptor SecA. This is Protein-export protein SecB from Bradyrhizobium diazoefficiens (strain JCM 10833 / BCRC 13528 / IAM 13628 / NBRC 14792 / USDA 110).